Here is a 1893-residue protein sequence, read N- to C-terminus: Nestin (1893 aa).

Met-1 carries the N-acetylmethionine modification. The head stretch occupies residues 1–7; it reads MEGCVGE. The tract at residues 8–43 is coil 1A; the sequence is ESFQMWELNRRLEAYLTRVKTLEEQNQLLSAELGGL. Positions 8–314 constitute an IF rod domain; that stretch reads ESFQMWELNR…TLLEAENSRL (307 aa). The linker 1 stretch occupies residues 44-55; the sequence is RAQSGDTSWRAR. The tract at residues 56-151 is coil 1B; it reads ADDELASLRI…AAHEEERAHL (96 aa). The interval 150 to 172 is disordered; the sequence is HLNAQAACAPRRPPAPPHGSPVR. The tract at residues 152-174 is linker 12; it reads NAQAACAPRRPPAPPHGSPVRAP. Positions 175 to 193 are coil 2A; it reads EVEDLARRLGEVWRGAVRD. The linker 2 stretch occupies residues 194-196; the sequence is YQE. The segment at 197–314 is coil 2B; it reads RVAHMESSLG…TLLEAENSRL (118 aa). Residue Ser-312 is modified to Phosphoserine. The interval 315 to 1893 is tail; it reads QTPGRGSQAS…DGDSWSSGED (1579 aa). Phosphothreonine is present on Thr-316. A phosphoserine mark is found at Ser-356 and Ser-359. The residue at position 389 (Thr-389) is a Phosphothreonine. 3 disordered regions span residues 437-479, 507-529, and 556-879; these read PELE…SGSR, NSSA…SQGP, and KENC…NQKS. Residues 507-517 show a composition bias toward polar residues; that stretch reads NSSAQKTQESG. Ser-562 is subject to Phosphoserine. Composition is skewed to basic and acidic residues over residues 572 to 595 and 606 to 615; these read GPEK…EKTL and LGKEDTRTED. Ser-620 carries the phosphoserine modification. Basic and acidic residues-rich tracts occupy residues 634–646 and 670–681; these read ESQE…KEGN and MLERLVEKEDQS. Ser-685 and Ser-729 each carry phosphoserine. Basic and acidic residues-rich tracts occupy residues 717 to 730, 761 to 774, 802 to 818, and 846 to 879; these read RLIE…LRSP, RLIE…LRSA, ILER…LRSP, and MLER…NQKS. Ser-817 bears the Phosphoserine mark. Ser-903 carries the phosphoserine modification. Composition is skewed to basic and acidic residues over residues 949 to 966 and 989 to 1051; these read LLED…DRNG and QRIV…KSLE. The interval 949–1130 is disordered; that stretch reads LLEDKTHKSL…ARSLGKENQE (182 aa). Phosphoserine occurs at positions 1005 and 1049. Residue Lys-1136 forms a Glycyl lysine isopeptide (Lys-Gly) (interchain with G-Cter in SUMO1); alternate linkage. Lys-1136 is covalently cross-linked (Glycyl lysine isopeptide (Lys-Gly) (interchain with G-Cter in SUMO2); alternate). 2 positions are modified to phosphoserine: Ser-1145 and Ser-1166. The disordered stretch occupies residues 1155 to 1222; it reads ETAEEDLERR…ELSSLGKWNV (68 aa). The segment covering 1198–1212 has biased composition (basic and acidic residues); the sequence is DENRETLTSLEKESQ. Ser-1216 and Ser-1229 each carry phosphoserine. The segment at 1237–1263 is disordered; that stretch reads EGLQEEQHQESLREVKQELPSSGNQQR. The span at 1241–1253 shows a compositional bias: basic and acidic residues; sequence EEQHQESLREVKQ. Ser-1322 carries the post-translational modification Phosphoserine. 2 disordered regions span residues 1336-1369 and 1388-1824; these read DNLE…EQDS and EVVG…SEQV. 2 stretches are compositionally biased toward basic and acidic residues: residues 1354–1363 and 1393–1403; these read VTERDEDRAQ and EDPRHFAREEA. Acidic residues-rich tracts occupy residues 1458 to 1469 and 1561 to 1576; these read ESMEGWEEEEAS and QDWE…DDLG. Phosphoserine is present on residues Ser-1570, Ser-1594, Ser-1686, Ser-1695, Ser-1772, and Ser-1774. The segment covering 1688 to 1709 has biased composition (acidic residues); the sequence is GFADEEESGEEGEEEDADEEGA. Residues 1773 to 1788 show a composition bias toward acidic residues; it reads GSEESESASLEGEEGQ. The segment covering 1815–1824 has biased composition (polar residues); sequence QSPNLDSEQV. Phosphoserine is present on residues Ser-1866, Ser-1889, and Ser-1890. Positions 1870 to 1893 are disordered; sequence LGPSQPLKFTLSGVDGDSWSSGED.

The protein belongs to the intermediate filament family. In terms of assembly, forms homodimers and homotetramers in vitro. In mixtures with other intermediate filament proteins such as vimentin and alpha-internexin, this protein preferentially forms heterodimers which can assemble to form intermediate filaments if nestin does not exceed 25%. Interacts with FHOD3. Constitutively phosphorylated. This increases during mitosis when the cytoplasmic intermediate filament network is reorganized. CNS stem cells.

Required for brain and eye development. Promotes the disassembly of phosphorylated vimentin intermediate filaments (IF) during mitosis and may play a role in the trafficking and distribution of IF proteins and other cellular factors to daughter cells during progenitor cell division. Required for survival, renewal and mitogen-stimulated proliferation of neural progenitor cells. The chain is Nestin (Nes) from Rattus norvegicus (Rat).